Consider the following 601-residue polypeptide: Somatic embryogenesis receptor kinase 5 (601 aa).

The signal sequence occupies residues 1 to 24 (MEHGSSRGFIWLILFLDFVSRVTG). Residues 25 to 215 (KTQVDALIAL…SPSPSPSGTS (191 aa)) are Extracellular-facing. Residues Asn-52, Asn-81, Asn-105, Asn-129, Asn-151, and Asn-184 are each glycosylated (N-linked (GlcNAc...) asparagine). LRR repeat units follow at residues 71–94 (SVTRLDLGSANLSGELVPQLAQLP), 95–118 (NLQYLELFNNNITGEIPEELGDLM), 119–141 (ELVSLDLFANNISGPIPSSLGKL), 143–165 (KLRFLRLYNNSLSGEIPRSLTAL), and 166–188 (PLDVLDISNNRLSGDIPVNGSFS). Residues 216–236 (AAIVVGVAAGAALLFALAWWL) form a helical membrane-spanning segment. The Cytoplasmic segment spans residues 237 to 601 (RRKLQGHFLD…IENDYPSGPR (365 aa)). Position 272 is a phosphothreonine (Thr-272). In terms of domain architecture, Protein kinase spans 275 to 572 (FSKRNVLGKG…KEEMPIHDFN (298 aa)). ATP is bound at residue 281–289 (LGKGRFGIL). Thr-298 bears the Phosphothreonine mark. Residue Lys-303 coordinates ATP. Residues Ser-356 and Ser-359 each carry the phosphoserine modification. Residue Asp-402 is the Proton acceptor of the active site. 3 positions are modified to phosphothreonine: Thr-435, Thr-436, and Thr-441. Tyr-449 is subject to Phosphotyrosine. Ser-451 is modified (phosphoserine). Thr-452 is subject to Phosphothreonine. Ser-456 and Ser-506 each carry phosphoserine. At Thr-532 the chain carries Phosphothreonine.

Belongs to the protein kinase superfamily. Ser/Thr protein kinase family. In terms of assembly, interacts with TMK4/BARK1. Autophosphorylated.

Its subcellular location is the cell membrane. The catalysed reaction is L-seryl-[protein] + ATP = O-phospho-L-seryl-[protein] + ADP + H(+). It carries out the reaction L-threonyl-[protein] + ATP = O-phospho-L-threonyl-[protein] + ADP + H(+). In terms of biological role, serine/threonine-kinase of unknown function. This is Somatic embryogenesis receptor kinase 5 (SERK5) from Arabidopsis thaliana (Mouse-ear cress).